Here is a 263-residue protein sequence, read N- to C-terminus: Orotidine 5'-phosphate decarboxylase (263 aa).

Substrate contacts are provided by residues D38, 60-62 (KTH), 91-100 (DRKFADIGNT), Y213, and R232. K93 (proton donor) is an active-site residue.

The protein belongs to the OMP decarboxylase family.

The catalysed reaction is orotidine 5'-phosphate + H(+) = UMP + CO2. It participates in pyrimidine metabolism; UMP biosynthesis via de novo pathway; UMP from orotate: step 2/2. The protein is Orotidine 5'-phosphate decarboxylase (PYR4) of Rhizomucor pusillus.